A 988-amino-acid polypeptide reads, in one-letter code: Bifunctional glutamine synthetase adenylyltransferase/adenylyl-removing enzyme (988 aa).

Residues 1-472 (MTKRETVERR…RYSALFEQET (472 aa)) are adenylyl removase. The interval 476 to 988 (GEAGNLVFTG…AFVAVVKNGG (513 aa)) is adenylyl transferase.

It belongs to the GlnE family. Mg(2+) is required as a cofactor.

It carries out the reaction [glutamine synthetase]-O(4)-(5'-adenylyl)-L-tyrosine + phosphate = [glutamine synthetase]-L-tyrosine + ADP. It catalyses the reaction [glutamine synthetase]-L-tyrosine + ATP = [glutamine synthetase]-O(4)-(5'-adenylyl)-L-tyrosine + diphosphate. Involved in the regulation of glutamine synthetase GlnA, a key enzyme in the process to assimilate ammonia. When cellular nitrogen levels are high, the C-terminal adenylyl transferase (AT) inactivates GlnA by covalent transfer of an adenylyl group from ATP to specific tyrosine residue of GlnA, thus reducing its activity. Conversely, when nitrogen levels are low, the N-terminal adenylyl removase (AR) activates GlnA by removing the adenylyl group by phosphorolysis, increasing its activity. The regulatory region of GlnE binds the signal transduction protein PII (GlnB) which indicates the nitrogen status of the cell. This chain is Bifunctional glutamine synthetase adenylyltransferase/adenylyl-removing enzyme, found in Agrobacterium fabrum (strain C58 / ATCC 33970) (Agrobacterium tumefaciens (strain C58)).